The chain runs to 364 residues: Thebaine 6-O-demethylase (364 aa).

In terms of domain architecture, Fe2OG dioxygenase spans glycine 214–proline 314. Tyrosine 223 is a 2-oxoglutarate binding site. 3 residues coordinate Fe cation: histidine 238, aspartate 240, and histidine 295. The 2-oxoglutarate site is built by arginine 305 and serine 307.

The protein belongs to the iron/ascorbate-dependent oxidoreductase family. The cofactor is L-ascorbate. Fe cation serves as cofactor. Mainly expressed in stems and leaves and, to a lower extent, in capsules and roots.

It catalyses the reaction thebaine + 2-oxoglutarate + O2 = neopinone + formaldehyde + succinate + CO2. It carries out the reaction oripavine + 2-oxoglutarate + O2 = neomorphinone + formaldehyde + succinate + CO2. The enzyme catalyses (S)-canadine + S-adenosyl-L-methionine = (S)-cis-N-methylcanadine + S-adenosyl-L-homocysteine. The catalysed reaction is thebaine + 2-oxoglutarate + O2 = 6-O-demethylthebaine + formaldehyde + succinate + CO2 + H(+). It participates in alkaloid biosynthesis; morphine biosynthesis. Its activity is regulated as follows. Moderate substrate inhibition. Not inhibited in vitro by acylcyclohexanediones. Non-heme dioxygenase involved in biosynthesis of morphinan-type benzylisoquinoline and opiate alkaloids natural products. Mediates the conversion of thebaine to neopinone. Also catalyzes, with lower efficiency, the 6-O-demethylation of oripavine to neomorphinone, which is converted spontaneously to morphinone. Supports dealkylation reactions such as O,O-demethylenation in the metabolism of protopine, benzo[c]phenanthridine, and rhoeadine alkaloids; cleaves a methylenedioxy bridge leaving two hydroxyl groups. Catalyzes the O-demethylation of methylenedioxy bridges on protopine alkaloids such as allocryptopine. No activity with (S)-reticuline, salutaridine, papaverine, (S)-corytuberine, (S)-scoulerine, pavine, noscapine or codeine. The chain is Thebaine 6-O-demethylase from Papaver somniferum (Opium poppy).